The sequence spans 348 residues: Holliday junction branch migration complex subunit RuvB (348 aa).

Residues 4–184 are large ATPase domain (RuvB-L); sequence TDRLIAASGR…FGIVQRLEFY (181 aa). ATP is bound by residues I23, R24, G65, K68, T69, T70, 131-133, R174, Y184, and R221; that span reads EDF. Mg(2+) is bound at residue T69. Residues 185–255 are small ATPAse domain (RuvB-S); it reads SNKDLATIVS…VADMALNLLD (71 aa). A head domain (RuvB-H) region spans residues 258 to 348; that stretch reads ERGFDHSDRR…GGEYAAQDDE (91 aa). DNA-binding residues include R294, R313, and R318.

Belongs to the RuvB family. As to quaternary structure, homohexamer. Forms an RuvA(8)-RuvB(12)-Holliday junction (HJ) complex. HJ DNA is sandwiched between 2 RuvA tetramers; dsDNA enters through RuvA and exits via RuvB. An RuvB hexamer assembles on each DNA strand where it exits the tetramer. Each RuvB hexamer is contacted by two RuvA subunits (via domain III) on 2 adjacent RuvB subunits; this complex drives branch migration. In the full resolvosome a probable DNA-RuvA(4)-RuvB(12)-RuvC(2) complex forms which resolves the HJ.

The protein resides in the cytoplasm. The catalysed reaction is ATP + H2O = ADP + phosphate + H(+). The RuvA-RuvB-RuvC complex processes Holliday junction (HJ) DNA during genetic recombination and DNA repair, while the RuvA-RuvB complex plays an important role in the rescue of blocked DNA replication forks via replication fork reversal (RFR). RuvA specifically binds to HJ cruciform DNA, conferring on it an open structure. The RuvB hexamer acts as an ATP-dependent pump, pulling dsDNA into and through the RuvAB complex. RuvB forms 2 homohexamers on either side of HJ DNA bound by 1 or 2 RuvA tetramers; 4 subunits per hexamer contact DNA at a time. Coordinated motions by a converter formed by DNA-disengaged RuvB subunits stimulates ATP hydrolysis and nucleotide exchange. Immobilization of the converter enables RuvB to convert the ATP-contained energy into a lever motion, pulling 2 nucleotides of DNA out of the RuvA tetramer per ATP hydrolyzed, thus driving DNA branch migration. The RuvB motors rotate together with the DNA substrate, which together with the progressing nucleotide cycle form the mechanistic basis for DNA recombination by continuous HJ branch migration. Branch migration allows RuvC to scan DNA until it finds its consensus sequence, where it cleaves and resolves cruciform DNA. The chain is Holliday junction branch migration complex subunit RuvB from Pseudomonas entomophila (strain L48).